A 519-amino-acid polypeptide reads, in one-letter code: Sensory neuron membrane protein 2 (519 aa).

Over 1–7 the chain is Cytoplasmic; it reads MLAKHSK. The chain crosses the membrane as a helical span at residues 8–28; the sequence is LFFTGSVVFLIVAIVLASWGF. Topologically, residues 29–469 are extracellular; that stretch reads PKIISTRIQK…DAHALLSYAQ (441 aa). N-linked (GlcNAc...) asparagine glycans are attached at residues Asn44, Asn67, Asn104, Asn166, Asn229, Asn272, and Asn314. 3 disulfides stabilise this stretch: Cys268–Cys338, Cys299–Cys362, and Cys340–Cys351. A helical membrane pass occupies residues 470 to 490; sequence LARWIILAAAIILAIIATITV. The Cytoplasmic portion of the chain corresponds to 491–519; it reads ARSTSLISWPRNSNSVNFIIGPMVNDKMR.

It belongs to the CD36 family. Localizes to both male and female antennae but not the leg, wing, gut, head or thoracic ganglia. Detected throughout the sensory epithelium, associating with both sex-pheromone sensilla and plant-volatile sensilla. Differentially expressed among different sensilla and different neurons within a given sensillum.

It localises to the cell membrane. Functionally, plays an olfactory role that is not restricted to pheromone sensitivity. This is Sensory neuron membrane protein 2 from Manduca sexta (Tobacco hawkmoth).